We begin with the raw amino-acid sequence, 265 residues long: Probable DNA replication complex GINS protein PSF3 (265 aa).

Positions 180 to 265 (ISTSSNNKNN…KKRKRMFDDE (86 aa)) are disordered. Residues 183-246 (SSNNKNNSSN…NNNNNSQNSS (64 aa)) show a composition bias toward low complexity. Residues 255 to 265 (VKKRKRMFDDE) show a composition bias toward basic residues.

It belongs to the GINS3/PSF3 family. Component of the GINS complex which is a heterotetramer of gins1, gins2, gins3 and gins4.

It localises to the nucleus. Its function is as follows. The GINS complex plays an essential role in the initiation of DNA replication. This chain is Probable DNA replication complex GINS protein PSF3 (gins3), found in Dictyostelium discoideum (Social amoeba).